A 609-amino-acid chain; its full sequence is MSAPTAPQTTLSTAPFPNSEKRYLIGTLYPQVRVPVRAIRQSATLEMIGGLTRQRPNPDVLVPDTSGPYTDPRIHIDLRRGLPHARPWLAADARLEVQAERLSAPLDGAGPLPFPAVPLSRRARSGQAITQMQAARRGEITPEMEFVALRENLRQAEAFELAQQHPGQSFGAAIPREITPEFVRAEVARGRAVIPANVNHPELEPTIIGRNFRVKVNANLGTSIVTSSIEEEVEKMVWATRWGADTVMDLSTGRHIHQTREWILRNSPVPVGTVPIYQALEKVGGVAEELTWEVYRDTLIEQAEQGVDYFTVHAGVRLAHIPLTARRRTGIVSRGGSILAKWCLAHHRENFLYTHFREICEILSAYDITFSLGDGLRPGSIEDANDAAQFAELDTLGELTRVAWEHGVQTMIEGPGHVPMQLIRENMTRQLQVCQEAPFYTLGPLTTDIAPGYDHITSAIGAAQIAWYGTAMLCYVTPKEHLGLPDRQDVRDGVIAYRIAAHAADLAKGHPGAQARDNALSQARFEFRWEDQFNLALDPERARALHDATLPADAAKTAHFCSMCGPHFCSMKLSHDLRADDILNGMAEKAREFRAAGGELYLDRPEGTP.

Residues Asn219, Met248, Tyr277, His313, 333–335 (SRG), 374–377 (DGLR), and Glu413 contribute to the substrate site. His417 contributes to the Zn(2+) binding site. Substrate is bound at residue Tyr440. Residue His481 participates in Zn(2+) binding. Residues Cys561, Cys564, and Cys569 each coordinate [4Fe-4S] cluster.

The protein belongs to the ThiC family. [4Fe-4S] cluster is required as a cofactor.

It catalyses the reaction 5-amino-1-(5-phospho-beta-D-ribosyl)imidazole + S-adenosyl-L-methionine = 4-amino-2-methyl-5-(phosphooxymethyl)pyrimidine + CO + 5'-deoxyadenosine + formate + L-methionine + 3 H(+). It functions in the pathway cofactor biosynthesis; thiamine diphosphate biosynthesis. Its function is as follows. Catalyzes the synthesis of the hydroxymethylpyrimidine phosphate (HMP-P) moiety of thiamine from aminoimidazole ribotide (AIR) in a radical S-adenosyl-L-methionine (SAM)-dependent reaction. The sequence is that of Phosphomethylpyrimidine synthase from Deinococcus geothermalis (strain DSM 11300 / CIP 105573 / AG-3a).